The chain runs to 328 residues: Ribosomal RNA large subunit methyltransferase F (328 aa).

Residues 1–31 (MTDTRKPPRKKPQRPAKPAAPREKATLHPRN) form a disordered region.

The protein belongs to the methyltransferase superfamily. METTL16/RlmF family.

It localises to the cytoplasm. It catalyses the reaction adenosine(1618) in 23S rRNA + S-adenosyl-L-methionine = N(6)-methyladenosine(1618) in 23S rRNA + S-adenosyl-L-homocysteine + H(+). Functionally, specifically methylates the adenine in position 1618 of 23S rRNA. The chain is Ribosomal RNA large subunit methyltransferase F from Pseudomonas savastanoi pv. phaseolicola (strain 1448A / Race 6) (Pseudomonas syringae pv. phaseolicola (strain 1448A / Race 6)).